The sequence spans 203 residues: ATP-dependent Clp protease proteolytic subunit 1 (203 aa).

The active-site Nucleophile is Ser-103. His-128 is a catalytic residue.

Belongs to the peptidase S14 family. Fourteen ClpP subunits assemble into 2 heptameric rings which stack back to back to give a disk-like structure with a central cavity, resembling the structure of eukaryotic proteasomes.

It localises to the cytoplasm. It carries out the reaction Hydrolysis of proteins to small peptides in the presence of ATP and magnesium. alpha-casein is the usual test substrate. In the absence of ATP, only oligopeptides shorter than five residues are hydrolyzed (such as succinyl-Leu-Tyr-|-NHMec, and Leu-Tyr-Leu-|-Tyr-Trp, in which cleavage of the -Tyr-|-Leu- and -Tyr-|-Trp bonds also occurs).. Functionally, cleaves peptides in various proteins in a process that requires ATP hydrolysis. Has a chymotrypsin-like activity. Plays a major role in the degradation of misfolded proteins. The chain is ATP-dependent Clp protease proteolytic subunit 1 from Treponema pallidum (strain Nichols).